A 326-amino-acid chain; its full sequence is Archaeal actin homolog (326 aa).

Residues 10-14 (YGDTK), S179, Q231, 285-288 (GGSN), and Q311 contribute to the ATP site.

The protein belongs to the thermophilic archaeal actin family.

Functionally, polymerizes into bundles of filaments, forming a helix with a filament width of 5.5 nm and an axial repeating unit of 5.5 nm. Polymerization of Ta0583 requires NTP and is optimal with ATP, but GTP, UTP, CTP, and even the deoxy form of NTP can also support the polymerization reaction. Nucleoside diphosphate or AMP-PNP does not support polymerization. The protein is Archaeal actin homolog of Thermoplasma acidophilum (strain ATCC 25905 / DSM 1728 / JCM 9062 / NBRC 15155 / AMRC-C165).